Reading from the N-terminus, the 190-residue chain is 6,7-dimethyl-8-ribityllumazine synthase (190 aa).

5-amino-6-(D-ribitylamino)uracil contacts are provided by residues W31, 65–67, and 89–91; these read SFE and CVI. 94-95 is a binding site for (2S)-2-hydroxy-3-oxobutyl phosphate; it reads ET. The Proton donor role is filled by H97. F122 contacts 5-amino-6-(D-ribitylamino)uracil. Position 136 (R136) interacts with (2S)-2-hydroxy-3-oxobutyl phosphate.

Belongs to the DMRL synthase family.

The enzyme catalyses (2S)-2-hydroxy-3-oxobutyl phosphate + 5-amino-6-(D-ribitylamino)uracil = 6,7-dimethyl-8-(1-D-ribityl)lumazine + phosphate + 2 H2O + H(+). It participates in cofactor biosynthesis; riboflavin biosynthesis; riboflavin from 2-hydroxy-3-oxobutyl phosphate and 5-amino-6-(D-ribitylamino)uracil: step 1/2. Catalyzes the formation of 6,7-dimethyl-8-ribityllumazine by condensation of 5-amino-6-(D-ribitylamino)uracil with 3,4-dihydroxy-2-butanone 4-phosphate. This is the penultimate step in the biosynthesis of riboflavin. This chain is 6,7-dimethyl-8-ribityllumazine synthase, found in Flavobacterium johnsoniae (strain ATCC 17061 / DSM 2064 / JCM 8514 / BCRC 14874 / CCUG 350202 / NBRC 14942 / NCIMB 11054 / UW101) (Cytophaga johnsonae).